The sequence spans 341 residues: Chorismate synthase (341 aa).

Disordered stretches follow at residues 45–64 (LERR…GRQE) and 109–134 (HADD…GRET). Arg48 contacts NADP(+). FMN-binding positions include 128–130 (RSS), Gly280, 295–299 (KPTSS), and Arg308.

The protein belongs to the chorismate synthase family. As to quaternary structure, homotetramer. FMNH2 is required as a cofactor.

The enzyme catalyses 5-O-(1-carboxyvinyl)-3-phosphoshikimate = chorismate + phosphate. It participates in metabolic intermediate biosynthesis; chorismate biosynthesis; chorismate from D-erythrose 4-phosphate and phosphoenolpyruvate: step 7/7. Functionally, catalyzes the anti-1,4-elimination of the C-3 phosphate and the C-6 proR hydrogen from 5-enolpyruvylshikimate-3-phosphate (EPSP) to yield chorismate, which is the branch point compound that serves as the starting substrate for the three terminal pathways of aromatic amino acid biosynthesis. This reaction introduces a second double bond into the aromatic ring system. The polypeptide is Chorismate synthase (Bdellovibrio bacteriovorus (strain ATCC 15356 / DSM 50701 / NCIMB 9529 / HD100)).